The primary structure comprises 1058 residues: COP1-interacting protein 7 (1058 aa).

3 disordered regions span residues 123–147 (LGGTWTSQKSTALSKTKGETDGDTV), 262–281 (HGNSMDASSQGSFETGQEGR), and 330–463 (MGDV…GNDN). 2 stretches are compositionally biased toward polar residues: residues 126–136 (TWTSQKSTALS) and 262–276 (HGNSMDASSQGSFET). A Nuclear localization signal 1 motif is present at residues 340 to 347 (SKKKKKKK). The span at 340 to 353 (SKKKKKKKKNKKKS) shows a compositional bias: basic residues. A compositionally biased stretch (acidic residues) spans 403–414 (DSDESGEEEGFV). Residues 431 to 438 (ERRHKSTS) carry the Nuclear localization signal 2 motif. The span at 432 to 446 (RRHKSTSHRQRKHKS) shows a compositional bias: basic residues. Basic and acidic residues predominate over residues 447–462 (HNGDDDSSNKETKGND). Phosphoserine is present on Ser477. The segment at 708–887 (AGEQTLDGKE…KSVELSRDPS (180 aa)) is disordered. A compositionally biased stretch (basic and acidic residues) spans 757–773 (SKSEMEEERKKRMEELL). The Nuclear localization signal 3 signature appears at 764 to 771 (ERKKRMEE). Over residues 783–808 (KSSGGSVSSSLASKKTPTVTKSVKSS) the composition is skewed to low complexity. 2 stretches are compositionally biased toward basic and acidic residues: residues 860-869 (KTEKAQEKKS) and 878-887 (KSVELSRDPS). 3 positions are modified to phosphoserine: Ser915, Ser986, and Ser992. Residues 1020–1041 (STPPATEADHSRKKWNSEETSP) form a disordered region. Over residues 1026 to 1040 (EADHSRKKWNSEETS) the composition is skewed to basic and acidic residues.

In terms of assembly, interacts with COP1.

The protein localises to the nucleus. Exhibits transcriptional activation activity. Positive regulator of light-regulated genes, probably being a direct downstream target of COP1 for mediating light control of gene expression. The sequence is that of COP1-interacting protein 7 from Arabidopsis thaliana (Mouse-ear cress).